The following is a 360-amino-acid chain: Phospho-N-acetylmuramoyl-pentapeptide-transferase (360 aa).

A run of 10 helical transmembrane segments spans residues 27–47 (IVSL…MIAW), 73–93 (TMGG…WANL), 94–114 (SNPY…VGFV), 132–152 (WKYF…YSIG), 168–188 (VMPQ…VGTS), 199–219 (GLAI…AWAT), 236–256 (ASEL…FLWF), 263–283 (VFMG…IAVL), 288–308 (FLLV…ILQV), and 338–358 (VIVR…ATLK).

It belongs to the glycosyltransferase 4 family. MraY subfamily. Mg(2+) serves as cofactor.

The protein localises to the cell inner membrane. The enzyme catalyses UDP-N-acetyl-alpha-D-muramoyl-L-alanyl-gamma-D-glutamyl-meso-2,6-diaminopimeloyl-D-alanyl-D-alanine + di-trans,octa-cis-undecaprenyl phosphate = di-trans,octa-cis-undecaprenyl diphospho-N-acetyl-alpha-D-muramoyl-L-alanyl-D-glutamyl-meso-2,6-diaminopimeloyl-D-alanyl-D-alanine + UMP. It participates in cell wall biogenesis; peptidoglycan biosynthesis. In terms of biological role, catalyzes the initial step of the lipid cycle reactions in the biosynthesis of the cell wall peptidoglycan: transfers peptidoglycan precursor phospho-MurNAc-pentapeptide from UDP-MurNAc-pentapeptide onto the lipid carrier undecaprenyl phosphate, yielding undecaprenyl-pyrophosphoryl-MurNAc-pentapeptide, known as lipid I. The polypeptide is Phospho-N-acetylmuramoyl-pentapeptide-transferase (Pectobacterium atrosepticum (strain SCRI 1043 / ATCC BAA-672) (Erwinia carotovora subsp. atroseptica)).